We begin with the raw amino-acid sequence, 307 residues long: tRNA pseudouridine synthase B (307 aa).

The Nucleophile role is filled by Asp38.

It belongs to the pseudouridine synthase TruB family. Type 1 subfamily.

It catalyses the reaction uridine(55) in tRNA = pseudouridine(55) in tRNA. Its function is as follows. Responsible for synthesis of pseudouridine from uracil-55 in the psi GC loop of transfer RNAs. The protein is tRNA pseudouridine synthase B of Lachnoclostridium phytofermentans (strain ATCC 700394 / DSM 18823 / ISDg) (Clostridium phytofermentans).